The chain runs to 125 residues: Large ribosomal subunit protein bL12 (125 aa).

The protein belongs to the bacterial ribosomal protein bL12 family. In terms of assembly, homodimer. Part of the ribosomal stalk of the 50S ribosomal subunit. Forms a multimeric L10(L12)X complex, where L10 forms an elongated spine to which 2 to 4 L12 dimers bind in a sequential fashion. Binds GTP-bound translation factors.

In terms of biological role, forms part of the ribosomal stalk which helps the ribosome interact with GTP-bound translation factors. Is thus essential for accurate translation. This chain is Large ribosomal subunit protein bL12, found in Helicobacter pylori (strain ATCC 700392 / 26695) (Campylobacter pylori).